The sequence spans 401 residues: 1-deoxy-D-xylulose 5-phosphate reductoisomerase (401 aa).

7 residues coordinate NADPH: T11, G12, S13, I14, R38, N39, and N125. K126 contacts 1-deoxy-D-xylulose 5-phosphate. E127 is an NADPH binding site. D151 lines the Mn(2+) pocket. S152, E153, S179, and H202 together coordinate 1-deoxy-D-xylulose 5-phosphate. Residue E153 coordinates Mn(2+). Residue G208 participates in NADPH binding. Positions 215, 220, 221, and 224 each coordinate 1-deoxy-D-xylulose 5-phosphate. E224 serves as a coordination point for Mn(2+).

It belongs to the DXR family. Mg(2+) is required as a cofactor. Mn(2+) serves as cofactor.

It catalyses the reaction 2-C-methyl-D-erythritol 4-phosphate + NADP(+) = 1-deoxy-D-xylulose 5-phosphate + NADPH + H(+). It participates in isoprenoid biosynthesis; isopentenyl diphosphate biosynthesis via DXP pathway; isopentenyl diphosphate from 1-deoxy-D-xylulose 5-phosphate: step 1/6. Its function is as follows. Catalyzes the NADPH-dependent rearrangement and reduction of 1-deoxy-D-xylulose-5-phosphate (DXP) to 2-C-methyl-D-erythritol 4-phosphate (MEP). In Paraburkholderia xenovorans (strain LB400), this protein is 1-deoxy-D-xylulose 5-phosphate reductoisomerase.